The chain runs to 314 residues: tRNA pseudouridine synthase B (314 aa).

Residue His-43 coordinates substrate. The active-site Nucleophile is the Asp-48. The substrate site is built by Tyr-76, Tyr-179, and Leu-200.

It belongs to the pseudouridine synthase TruB family. Type 1 subfamily.

It carries out the reaction uridine(55) in tRNA = pseudouridine(55) in tRNA. Responsible for synthesis of pseudouridine from uracil-55 in the psi GC loop of transfer RNAs. This chain is tRNA pseudouridine synthase B, found in Escherichia coli O157:H7.